Consider the following 336-residue polypeptide: MAELKLGYKASAEQFAPRELVELAVLAESAGMDSATVSDHFQPWRHEGGHAPFSLAWMTAVGERTKNLVLGTSVLTPTFRYNPAVIAQAFATMGCLYPGRIFLGVGTGEALNEIATGYAGEWPEFKERFARLRESVRLMRELWLGDRVDFDGEYYRTKGASIYDVPEGGIPVYIAAGGPVVAKYAGRAGDGFICTSGKGEELYAEKLIPAVKEGAAAADRDADAIDRMIEIKISYDTDPELALENTRFWAPLSLTAEQKHSIDDPIEMEKAADALPIEQVAKRWIVASDPDEAVEKVGQYVKWGLNHLVFHAPGHDQRRFLELFKRDLEPRLRKLA.

D39 serves as a coordination point for coenzyme F420-(gamma-Glu)n. H40 (proton donor) is an active-site residue. Coenzyme F420-(gamma-Glu)n-binding positions include T76 and 107–108; that span reads TG. Catalysis depends on E109, which acts as the Proton acceptor. Coenzyme F420-(gamma-Glu)n is bound by residues N112, 177–178, and 180–181; these read GG and VV. Substrate is bound by residues T195, K198, K259, and R283.

This sequence belongs to the F420-dependent glucose-6-phosphate dehydrogenase family. As to quaternary structure, homodimer.

It carries out the reaction oxidized coenzyme F420-(gamma-L-Glu)(n) + D-glucose 6-phosphate + H(+) = 6-phospho-D-glucono-1,5-lactone + reduced coenzyme F420-(gamma-L-Glu)(n). Its function is as follows. Catalyzes the coenzyme F420-dependent oxidation of glucose 6-phosphate (G6P) to 6-phosphogluconolactone. Appears to have a role in resistance to oxidative stress, via its consumption of G6P that serves as a source of reducing power to combat oxidative stress in mycobacteria. Cannot use NAD, NADP, FAD or FMN instead of coenzyme F420 as an electron acceptor. Exhibits nearly no activity with D-mannose-6-phosphate or D-fructose-6-phosphate as substrate. In Mycolicibacterium smegmatis (strain ATCC 700084 / mc(2)155) (Mycobacterium smegmatis), this protein is F420-dependent glucose-6-phosphate dehydrogenase (fgd).